A 290-amino-acid polypeptide reads, in one-letter code: Small ribosomal subunit biogenesis GTPase RsgA (290 aa).

Residues 63 to 220 (KNELIRPPIA…IADTPGFSNL (158 aa)) form the CP-type G domain. Residues 112–115 (NKFD) and 162–170 (GPSGVGKST) contribute to the GTP site. 4 residues coordinate Zn(2+): C244, C249, H251, and C257.

Belongs to the TRAFAC class YlqF/YawG GTPase family. RsgA subfamily. Monomer. Associates with 30S ribosomal subunit, binds 16S rRNA. The cofactor is Zn(2+).

Its subcellular location is the cytoplasm. Its function is as follows. One of several proteins that assist in the late maturation steps of the functional core of the 30S ribosomal subunit. Helps release RbfA from mature subunits. May play a role in the assembly of ribosomal proteins into the subunit. Circularly permuted GTPase that catalyzes slow GTP hydrolysis, GTPase activity is stimulated by the 30S ribosomal subunit. The sequence is that of Small ribosomal subunit biogenesis GTPase RsgA from Carboxydothermus hydrogenoformans (strain ATCC BAA-161 / DSM 6008 / Z-2901).